Consider the following 141-residue polypeptide: HTH-type transcriptional repressor NsrR (141 aa).

In terms of domain architecture, HTH rrf2-type spans 2–129 (QLTSFTDYGL…DQYTLADMVK (128 aa)). The H-T-H motif DNA-binding region spans 28–51 (ISEVTEVYGVSRNHMVKIINQLSR). Positions 91, 96, and 102 each coordinate [2Fe-2S] cluster.

[2Fe-2S] cluster is required as a cofactor.

Its function is as follows. Nitric oxide-sensitive repressor of genes involved in protecting the cell against nitrosative stress. May require iron for activity. The protein is HTH-type transcriptional repressor NsrR of Pectobacterium atrosepticum (strain SCRI 1043 / ATCC BAA-672) (Erwinia carotovora subsp. atroseptica).